Consider the following 1201-residue polypeptide: Kinesin-like protein costa (1201 aa).

In terms of domain architecture, Kinesin motor spans 4-391 (PIQVAVRIFP…LQFAFKVQCV (388 aa)). A disordered region spans residues 23 to 92 (SFGPTEPKKD…NGNDSGQKDY (70 aa)). Over residues 28-56 (EPKKDAQAVDEGADSKDSEAQVPAAEKDN) the composition is skewed to basic and acidic residues. The segment covering 57–75 (PSISETDPNGNAEQDSAAD) has biased composition (polar residues). Residue 175–182 (GQRGQGKS) participates in ATP binding. Disordered regions lie at residues 502–536 (AEEP…PDLD), 565–606 (HPKA…GASL), and 618–639 (ASQQ…ESSS). Positions 510–521 (SEAANSESPNSD) are enriched in low complexity. Phosphoserine is present on residues S599 and S605. Coiled coils occupy residues 652 to 821 (AATA…ELVK) and 968 to 1001 (TKVI…ERVL).

It belongs to the TRAFAC class myosin-kinesin ATPase superfamily. Kinesin family. KIF27 subfamily. In terms of assembly, homodimer (Potential). Binds microtubules. Interacts with ci, smo, sgg, CkIalpha and protein kinase A catalytic subunit. Interacts (via kinesin motor domain) with Ubr3. Post-translationally, polyubiquitinated by Ubr3, which leads to proteasomal degradation.

The protein localises to the cytoplasm. It is found in the cytoskeleton. In terms of biological role, regulates cubitus interruptus (ci) processing by recruiting multiple kinases to promote its efficient phosphorylation. Scaffolds multiple kinases and ci into proximity to promote its hyperphosphorylation, which then targets it for SCFSlimb/proteasome-mediated processing to generate its repressor form. Hh signaling inhibits ci phosphorylation by interfering with the cos-ci-kinases complex formation. Negatively regulates hh-signaling pathways during various processes, including photoreceptor differentiation. May negatively regulate a hh-signaling pathway which functions in the intestinal immune response to bacterial uracil by activating the Duox-dependent production of reactive oxygen species (ROS). The sequence is that of Kinesin-like protein costa (cos) from Drosophila melanogaster (Fruit fly).